A 529-amino-acid polypeptide reads, in one-letter code: UDP-glucuronosyltransferase 2B1 (529 aa).

An N-terminal signal peptide occupies residues 1 to 23 (MSMKQTSVFLLIQLICYFRPGAC). N134 and N316 each carry an N-linked (GlcNAc...) asparagine glycan. Residues 494–510 (VIGFLLLCVVGVVFIIT) form a helical membrane-spanning segment.

Belongs to the UDP-glycosyltransferase family.

Its subcellular location is the endoplasmic reticulum membrane. The enzyme catalyses glucuronate acceptor + UDP-alpha-D-glucuronate = acceptor beta-D-glucuronoside + UDP + H(+). It carries out the reaction 17beta-estradiol + UDP-alpha-D-glucuronate = 17beta-estradiol 17-O-(beta-D-glucuronate) + UDP + H(+). In terms of biological role, UDP-glucuronosyltransferase (UGT) that catalyzes phase II biotransformation reactions in which lipophilic substrates are conjugated with glucuronic acid to increase the metabolite's water solubility, thereby facilitating excretion into either the urine or bile. Essential for the elimination and detoxification of drugs, xenobiotics and endogenous compounds. Catalyzes the glucuronidation of the endogenous estrogen hormone estradiol. This chain is UDP-glucuronosyltransferase 2B1, found in Rattus norvegicus (Rat).